The chain runs to 284 residues: Bifunctional protein FolD (284 aa).

NADP(+) is bound by residues 164-166, Ser189, and Ile230; that span reads GRG.

It belongs to the tetrahydrofolate dehydrogenase/cyclohydrolase family. In terms of assembly, homodimer.

The catalysed reaction is (6R)-5,10-methylene-5,6,7,8-tetrahydrofolate + NADP(+) = (6R)-5,10-methenyltetrahydrofolate + NADPH. The enzyme catalyses (6R)-5,10-methenyltetrahydrofolate + H2O = (6R)-10-formyltetrahydrofolate + H(+). Its pathway is one-carbon metabolism; tetrahydrofolate interconversion. In terms of biological role, catalyzes the oxidation of 5,10-methylenetetrahydrofolate to 5,10-methenyltetrahydrofolate and then the hydrolysis of 5,10-methenyltetrahydrofolate to 10-formyltetrahydrofolate. This chain is Bifunctional protein FolD, found in Desulforamulus reducens (strain ATCC BAA-1160 / DSM 100696 / MI-1) (Desulfotomaculum reducens).